The following is an 855-amino-acid chain: Probable inactive ATP-dependent zinc metalloprotease FTSHI 4, chloroplastic (855 aa).

Residues 1–78 constitute a chloroplast transit peptide; the sequence is MTFYISSSLT…SFESTESSVS (78 aa). The helical transmembrane segment at 242–262 threads the bilayer; that stretch reads VATFVVWSMRLALFVSLYVWI. Residue 356 to 363 participates in ATP binding; the sequence is GPPGTGKT.

Belongs to the AAA ATPase family. In terms of assembly, homooligomer. Interacts with FtsHi2. In terms of tissue distribution, ubiquitous but preferentially expressed in young leaves.

The protein resides in the plastid. It localises to the chloroplast thylakoid membrane. Functionally, functions in chloroplast biogenesis and chloroplast division. Required for plastid development during embryogenesis. Might be involved in chaperone functions or play a structural role in the thylakoid FtsH complex. The chain is Probable inactive ATP-dependent zinc metalloprotease FTSHI 4, chloroplastic from Arabidopsis thaliana (Mouse-ear cress).